A 783-amino-acid polypeptide reads, in one-letter code: MASPCLTKSDSGINGVDFTEKFRLEDSTLLANGQVVLTDVPVNVTLTSSPYLVDKDGVPLDVSAGSFIGFNLDGEPKSHHVASIGKLKNIRFMSIFRFKVWWTTHWVGSNGRDIENETQIIILDQSGSDSGPGSGSGRPYVLLLPLLEGSFRSSFQSGEDDDVAVCVESGSTEVTGSEFRQIVYVHAGDDPFKLVKDAMKVIRVHMNTFKLLEEKSPPGIVDKFGWCTWDAFYLTVNPDGVHKGVKCLVDGGCPPGLVLIDDGWQSIGHDSDGIDVEGMNITVAGEQMPCRLLKFEENHKFKDYVSPKDQNDVGMKAFVRDLKDEFSTVDYIYVWHALCGYWGGLRPEAPALPPSTIIRPELSPGLKLTMEDLAVDKIIETGIGFASPDLAKEFYEGLHSHLQNAGIDGVKVDVIHILEMLCQKYGGRVDLAKAYFKALTSSVNKHFNGNGVIASMEHCNDFMFLGTEAISLGRVGDDFWCTDPSGDPNGTFWLQGCHMVHCAYNSLWMGNFIQPDWDMFQSTHPCAEFHAASRAISGGPIYISDCVGKHDFDLLKRLVLPNGSILRCEYYALPTRDRLFEDPLHDGKTMLKIWNLNKYTGVIGAFNCQGGGWCRETRRNQCFSECVNTLTATTSPKDVEWNSGSSPISIANVEEFALFLSQSKKLLLSGLNDDLELTLEPFKFELITVSPVVTIEGNSVRFAPIGLVNMLNTSGAIRSLVYNDESVEVGVFGAGEFRVYASKKPVSCLIDGEVVEFGYEDSMVMVQVPWSGPDGLSSIQYLF.

2 positions are modified to phosphoserine: serine 9 and serine 11.

This sequence belongs to the glycosyl hydrolases 36 family.

The enzyme catalyses alpha-D-galactosyl-(1-&gt;3)-1D-myo-inositol + sucrose = raffinose + myo-inositol. In terms of biological role, transglycosidase operating by a ping-pong reaction mechanism. Involved in the synthesis of raffinose, a major soluble carbohydrate in seeds, roots and tubers. The protein is Probable galactinol--sucrose galactosyltransferase 5 (RFS5) of Arabidopsis thaliana (Mouse-ear cress).